Consider the following 87-residue polypeptide: U9-ctenitoxin-Pn1a (87 aa).

A signal peptide spans 1 to 22; that stretch reads MWLKTQLFVLAIAVIALLEVHA. The propeptide occupies 23-37; the sequence is EPESNDNNELVVEEA. Cystine bridges form between Cys40/Cys54, Cys47/Cys64, Cys53/Cys73, and Cys66/Cys71. The propeptide occupies 75-87; sequence KSLREMAAAAFGR.

This sequence belongs to the neurotoxin 02 (plectoxin) family. 01 (Tx3) subfamily. In terms of tissue distribution, expressed by the venom gland.

Its subcellular location is the secreted. Its function is as follows. Antagonist of L-type calcium channels (Cav1/CACNA1). The protein is U9-ctenitoxin-Pn1a of Phoneutria nigriventer (Brazilian armed spider).